Consider the following 129-residue polypeptide: UPF0102 protein RD1_1191 (129 aa).

It belongs to the UPF0102 family.

This Roseobacter denitrificans (strain ATCC 33942 / OCh 114) (Erythrobacter sp. (strain OCh 114)) protein is UPF0102 protein RD1_1191.